Reading from the N-terminus, the 683-residue chain is Dynein, 78 kDa intermediate chain, flagellar outer arm (683 aa).

The interval 1–42 (MPALSPAKKGTDKGKTGKKTGKQEQNAQDYIPPPPPMPGDEA) is disordered. 4 WD repeats span residues 358–398 (HTES…DEPI), 407–450 (KLND…LIPE), 562–602 (DLND…LLPL), and 608–647 (VKKA…RITS).

This sequence belongs to the dynein intermediate chain family. Consists of at least 3 heavy chains (alpha, beta and gamma), 2 intermediate chains and 8 light chains.

It localises to the cytoplasm. It is found in the cytoskeleton. The protein resides in the flagellum axoneme. In terms of biological role, is essential for arm assembly or attachment to the outer doublet microtubule. The polypeptide is Dynein, 78 kDa intermediate chain, flagellar outer arm (ODA9) (Chlamydomonas reinhardtii (Chlamydomonas smithii)).